A 415-amino-acid polypeptide reads, in one-letter code: Cell division control protein 11 (415 aa).

An N-acetylserine modification is found at Ser-2. Residue Ser-2 is modified to Phosphoserine. Positions 12–19 match the Basic motif motif; the sequence is RKRKHLKR. One can recognise a Septin-type G domain in the interval 19 to 298; sequence RGITFTVMIV…ERYRTEALSG (280 aa). The G1 motif stretch occupies residues 29–36; sequence GQSGSGRS. GTP contacts are provided by residues 29-36, Gly-92, 172-180, Gly-230, and Arg-247; these read GQSGSGRS and KSDSLTRDE. Positions 89–92 are G3 motif; that stretch reads DTPG. The tract at residues 171-174 is G4 motif; sequence SKSD. Phosphoserine is present on Ser-305. The interval 307 to 360 is disordered; it reads RPNLTKLNGSSSSSTTTRRNTNPFKQSNNINNDVLNPASDMHGQSTGENNETYM. Residues 316 to 328 show a composition bias toward low complexity; that stretch reads SSSSSTTTRRNTN. The residue at position 327 (Thr-327) is a Phosphothreonine. Polar residues-rich tracts occupy residues 329 to 340 and 348 to 359; these read PFKQSNNINNDV and HGQSTGENNETY. The stretch at 354–414 forms a coiled coil; sequence ENNETYMTRE…LEKEAKIKQE (61 aa). Lys-412 participates in a covalent cross-link: Glycyl lysine isopeptide (Lys-Gly) (interchain with G-Cter in SUMO).

Belongs to the TRAFAC class TrmE-Era-EngA-EngB-Septin-like GTPase superfamily. Septin GTPase family. Component of the septin complex which consists of CDC3, CDC10, CDC11, CDC12 and probably SHS1 and rearranges to a cortical collar of highly ordered filaments at the mother-bud-neck. A complex formed by CDC3, CDC10, CDC11 and CDC12 is capable of forming long filaments in vitro and the components seem to be present in a 2:2:2:2 arrangement in vivo. The filaments are proposed to be formed by the end-to-end polymerization of CDC3-CDC12-CDC11 complexes with CDC10 serving as a bridge to bundle the polymers into paired filaments. Component of the GIN4 complex composed of at least BNI5, CDC3, CDC10, CDC11, CDC12, GIN4, NAP1 and SHS1. Self-associates. Interacts with BEM4, KCC4, SPR28 and SYP1. Interacts with BNI5. In terms of processing, sumoylated during mitosis on the mother cell side of the bud neck. Sumoylation probably plays a central role in regulating septin ring disassembly during the cell cycle.

Its subcellular location is the membrane. The protein resides in the bud neck. Its function is as follows. Septins are GTPases involved in cytokinesis that assemble early in the cell cycle as a patch at the incipient bud site and form a ring approximate 15 minutes before bud emergence, which transforms into an hour-glass shaped collar of cortical filaments that spans both sides of the mother-bud neck. This collar persists until just before cytokinesis, when it splits into two rings that occupy opposite sides of the neck. The septins at the bud neck serve as a structural scaffold that recruits different components involved in diverse processes at specific stages during the cell cycle. Many proteins bind asymmetrically to the septin collar. The septin assembly is regulated by protein kinases GIN4 and/or CLA4. May act by recruiting MYO1 and HOF1, a protein involved in septation, to the site of cleavage. Septins are also involved in cell morphogenesis, bud site selection, chitin deposition, cell cycle regulation, cell compartmentalization and spore wall formation. CDCd11 with SHS1 11 are involved in the recruitment of BNI5 and thereby ensure efficient localization at the bud neck of MYO1, the type II myosin of the actomyosin contractile ring. The protein is Cell division control protein 11 of Saccharomyces cerevisiae (strain ATCC 204508 / S288c) (Baker's yeast).